The chain runs to 374 residues: Queuine tRNA-ribosyltransferase (374 aa).

Residue Asp89 is the Proton acceptor of the active site. Residues 89-93, Asp143, Gln187, and Gly214 contribute to the substrate site; that span reads DSGGF. The interval 245-251 is RNA binding; sequence GVGKPED. The active-site Nucleophile is the Asp264. Residues 269-273 form an RNA binding; important for wobble base 34 recognition region; it reads TRNAR. Cys302, Cys304, Cys307, and His333 together coordinate Zn(2+).

The protein belongs to the queuine tRNA-ribosyltransferase family. In terms of assembly, homodimer. Within each dimer, one monomer is responsible for RNA recognition and catalysis, while the other monomer binds to the replacement base PreQ1. Requires Zn(2+) as cofactor.

It catalyses the reaction 7-aminomethyl-7-carbaguanine + guanosine(34) in tRNA = 7-aminomethyl-7-carbaguanosine(34) in tRNA + guanine. It functions in the pathway tRNA modification; tRNA-queuosine biosynthesis. In terms of biological role, catalyzes the base-exchange of a guanine (G) residue with the queuine precursor 7-aminomethyl-7-deazaguanine (PreQ1) at position 34 (anticodon wobble position) in tRNAs with GU(N) anticodons (tRNA-Asp, -Asn, -His and -Tyr). Catalysis occurs through a double-displacement mechanism. The nucleophile active site attacks the C1' of nucleotide 34 to detach the guanine base from the RNA, forming a covalent enzyme-RNA intermediate. The proton acceptor active site deprotonates the incoming PreQ1, allowing a nucleophilic attack on the C1' of the ribose to form the product. After dissociation, two additional enzymatic reactions on the tRNA convert PreQ1 to queuine (Q), resulting in the hypermodified nucleoside queuosine (7-(((4,5-cis-dihydroxy-2-cyclopenten-1-yl)amino)methyl)-7-deazaguanosine). The sequence is that of Queuine tRNA-ribosyltransferase from Shewanella baltica (strain OS223).